The following is a 53-amino-acid chain: Sodium/potassium-transporting ATPase subunit gamma (53 aa).

The chain crosses the membrane as a helical span at residues 16–34 (GGLIFAALAFIVGLVIILS).

The protein belongs to the FXYD family. Regulatory subunit of the sodium/potassium-transporting ATPase which is composed of a catalytic alpha subunit, an auxiliary non-catalytic beta subunit and an additional regulatory subunit. In terms of processing, the N-terminus is blocked. In terms of tissue distribution, highest levels expressed in the kidney and spleen. Restricted to the basolateral membrane in renal epithelial cells and varies in its level of expression along the nephron.

It is found in the membrane. Its function is as follows. May be involved in forming the receptor site for cardiac glycoside binding or may modulate the transport function of the sodium ATPase. The sequence is that of Sodium/potassium-transporting ATPase subunit gamma (FXYD2) from Ovis aries (Sheep).